Consider the following 210-residue polypeptide: Orotate phosphoribosyltransferase (210 aa).

5-phospho-alpha-D-ribose 1-diphosphate is bound by residues arginine 94, lysine 98, histidine 100, and 120-128; that span reads EDLISTGGS. Serine 124 lines the orotate pocket.

This sequence belongs to the purine/pyrimidine phosphoribosyltransferase family. PyrE subfamily. In terms of assembly, homodimer. Requires Mg(2+) as cofactor.

The enzyme catalyses orotidine 5'-phosphate + diphosphate = orotate + 5-phospho-alpha-D-ribose 1-diphosphate. It functions in the pathway pyrimidine metabolism; UMP biosynthesis via de novo pathway; UMP from orotate: step 1/2. Its function is as follows. Catalyzes the transfer of a ribosyl phosphate group from 5-phosphoribose 1-diphosphate to orotate, leading to the formation of orotidine monophosphate (OMP). This Bacillus cereus (strain G9842) protein is Orotate phosphoribosyltransferase.